A 521-amino-acid chain; its full sequence is Ribonuclease Y (521 aa).

Residues 3 to 23 traverse the membrane as a helical segment; it reads VSIWMLVITVLAAVAAYFAGS. The region spanning 211–271 is the KH domain; sequence TVSVVPLPSD…VRREVARMSL (61 aa). The HD domain occupies 337 to 430; that stretch reads IYQHSLEVAF…VQAADALSGA (94 aa).

The protein belongs to the RNase Y family.

It is found in the cell membrane. Its function is as follows. Endoribonuclease that initiates mRNA decay. In Pelobacter propionicus (strain DSM 2379 / NBRC 103807 / OttBd1), this protein is Ribonuclease Y.